Here is a 214-residue protein sequence, read N- to C-terminus: Phosphatidyl-N-methylethanolamine N-methyltransferase (214 aa).

Residues 1–19 (MPLVALGVADLFNFVDYSK) lie on the Lumenal side of the membrane. Residues 20–40 (TSLAISAAAIAFNPTFWNIVA) constitute an intramembrane region (helical). Topologically, residues 41–52 (RREYRTKFLTRA) are lumenal. A helical membrane pass occupies residues 53–74 (FGGNAQVACYFLAVTIFGLGLV). At 75–101 (RDFLYERALRDQPSHPLLEGTYVKYAA) the chain is on the cytoplasmic side. A helical membrane pass occupies residues 102–122 (YALLALGNLLVITSTMRLGIT). 106–108 (ALG) lines the S-adenosyl-L-methionine pocket. Residues 123–165 (GTFLGDYFGILMDGIVTGFPFNVTSAPMYYGSTMSFLGTALLY) are Lumenal-facing. A helical membrane pass occupies residues 166-186 (GKPAGLLLTAWVLFVYIIAIQ). Topologically, residues 187–214 (FENPFTAEIYAKRDRERAKAAGTSKKEL) are cytoplasmic. 188–189 (EN) lines the S-adenosyl-L-methionine pocket.

It belongs to the class VI-like SAM-binding methyltransferase superfamily. PEMT/PEM2 methyltransferase family.

Its subcellular location is the endoplasmic reticulum membrane. The protein localises to the mitochondrion membrane. The enzyme catalyses a 1,2-diacyl-sn-glycero-3-phospho-N-methylethanolamine + S-adenosyl-L-methionine = a 1,2-diacyl-sn-glycero-3-phospho-N,N-dimethylethanolamine + S-adenosyl-L-homocysteine + H(+). It carries out the reaction a 1,2-diacyl-sn-glycero-3-phospho-N,N-dimethylethanolamine + S-adenosyl-L-methionine = a 1,2-diacyl-sn-glycero-3-phosphocholine + S-adenosyl-L-homocysteine + H(+). It participates in phospholipid metabolism; phosphatidylcholine biosynthesis. Its function is as follows. Catalyzes the second two steps of the methylation pathway of phosphatidylcholine biosynthesis, the SAM-dependent methylation of phosphatidylmonomethylethanolamine (PMME) to phosphatidyldimethylethanolamine (PDME) and of PDME to phosphatidylcholine (PC). This is Phosphatidyl-N-methylethanolamine N-methyltransferase from Neurospora crassa (strain ATCC 24698 / 74-OR23-1A / CBS 708.71 / DSM 1257 / FGSC 987).